A 464-amino-acid chain; its full sequence is ATP synthase subunit beta (464 aa).

152-159 (GGAGVGKT) lines the ATP pocket.

Belongs to the ATPase alpha/beta chains family. As to quaternary structure, F-type ATPases have 2 components, CF(1) - the catalytic core - and CF(0) - the membrane proton channel. CF(1) has five subunits: alpha(3), beta(3), gamma(1), delta(1), epsilon(1). CF(0) has three main subunits: a(1), b(2) and c(9-12). The alpha and beta chains form an alternating ring which encloses part of the gamma chain. CF(1) is attached to CF(0) by a central stalk formed by the gamma and epsilon chains, while a peripheral stalk is formed by the delta and b chains.

Its subcellular location is the cell membrane. It catalyses the reaction ATP + H2O + 4 H(+)(in) = ADP + phosphate + 5 H(+)(out). Produces ATP from ADP in the presence of a proton gradient across the membrane. The catalytic sites are hosted primarily by the beta subunits. In Ureaplasma parvum serovar 3 (strain ATCC 27815 / 27 / NCTC 11736), this protein is ATP synthase subunit beta.